The following is a 340-amino-acid chain: Zinc finger protein 367 (340 aa).

Residues 101 to 140 (GAPQSSASVAAVSGGEDEEEASSPDSGHLKDGIRRGRPRA) form a disordered region. The segment covering 127-140 (GHLKDGIRRGRPRA) has biased composition (basic and acidic residues). 2 consecutive C2H2-type zinc fingers follow at residues 157–179 (IRCN…KRTH) and 185–209 (YLCD…QRLH). A disordered region spans residues 280 to 317 (KGKLVQKADQEQQDPLEYLQSDEEDDEKSGAQRRLQEQ). The stretch at 299-332 (QSDEEDDEKSGAQRRLQEQRERLHGALALIELAN) forms a coiled coil. Residue serine 300 is modified to Phosphoserine. The span at 307-317 (KSGAQRRLQEQ) shows a compositional bias: basic and acidic residues.

It belongs to the krueppel C2H2-type zinc-finger protein family. Expressed in bone marrow and ovary.

Its subcellular location is the nucleus. In terms of biological role, transcriptional activator. Isoform 1 may be involved in transcriptional activation of erythroid genes. This chain is Zinc finger protein 367 (Znf367), found in Mus musculus (Mouse).